The sequence spans 452 residues: UDP-N-acetylmuramoylalanine--D-glutamate ligase (452 aa).

Residue 119–125 (GSNGKTT) participates in ATP binding.

It belongs to the MurCDEF family.

Its subcellular location is the cytoplasm. It catalyses the reaction UDP-N-acetyl-alpha-D-muramoyl-L-alanine + D-glutamate + ATP = UDP-N-acetyl-alpha-D-muramoyl-L-alanyl-D-glutamate + ADP + phosphate + H(+). It participates in cell wall biogenesis; peptidoglycan biosynthesis. Its function is as follows. Cell wall formation. Catalyzes the addition of glutamate to the nucleotide precursor UDP-N-acetylmuramoyl-L-alanine (UMA). This Streptococcus equi subsp. zooepidemicus (strain MGCS10565) protein is UDP-N-acetylmuramoylalanine--D-glutamate ligase.